A 490-amino-acid chain; its full sequence is Probable cytosol aminopeptidase (490 aa).

Mn(2+)-binding residues include Lys-256 and Asp-261. Lys-268 is a catalytic residue. Mn(2+) is bound by residues Asp-280, Asp-340, and Glu-342. The active site involves Arg-344.

Belongs to the peptidase M17 family. It depends on Mn(2+) as a cofactor.

The protein localises to the cytoplasm. The catalysed reaction is Release of an N-terminal amino acid, Xaa-|-Yaa-, in which Xaa is preferably Leu, but may be other amino acids including Pro although not Arg or Lys, and Yaa may be Pro. Amino acid amides and methyl esters are also readily hydrolyzed, but rates on arylamides are exceedingly low.. The enzyme catalyses Release of an N-terminal amino acid, preferentially leucine, but not glutamic or aspartic acids.. Presumably involved in the processing and regular turnover of intracellular proteins. Catalyzes the removal of unsubstituted N-terminal amino acids from various peptides. The chain is Probable cytosol aminopeptidase from Prochlorococcus marinus (strain MIT 9313).